Here is a 187-residue protein sequence, read N- to C-terminus: Ion-translocating oxidoreductase complex subunit B (187 aa).

The interval 1-23 (MIAAAASMSALGLGLGYLLGAAA) is hydrophobic. One can recognise a 4Fe-4S domain in the interval 29–88 (ETPPIVEEIAKILPGTNCGACGFPGCNGLAEAMAEGNAPVTACTPGGRDVALALAEIVTV). [4Fe-4S] cluster contacts are provided by Cys-46, Cys-49, Cys-54, Cys-71, Cys-112, Cys-115, Cys-118, Cys-122, Cys-142, Cys-145, Cys-148, and Cys-152. 2 4Fe-4S ferredoxin-type domains span residues 103–132 (MVAF…GGAK) and 133–162 (QIHT…SRVK).

Belongs to the 4Fe4S bacterial-type ferredoxin family. RnfB subfamily. In terms of assembly, the complex is composed of six subunits: RnfA, RnfB, RnfC, RnfD, RnfE and RnfG. The cofactor is [4Fe-4S] cluster.

It localises to the cellular chromatophore membrane. Part of a membrane-bound complex that couples electron transfer with translocation of ions across the membrane. Required for nitrogen fixation. Involved in electron transfer to nitrogenase. This is Ion-translocating oxidoreductase complex subunit B from Rhodobacter capsulatus (Rhodopseudomonas capsulata).